The primary structure comprises 473 residues: Sorting nexin-17 (473 aa).

The PX domain occupies 1–108; that stretch reads MHFSIPETEV…SFLRKAQQET (108 aa). Residues Arg35, Ser37, Lys61, and Arg74 each coordinate a 1,2-diacyl-sn-glycero-3-phospho-(1D-myo-inositol-3-phosphate). Residues 114-205 enclose the Ras-associating domain; the sequence is EEVQLEIYLS…YRIILRKSYW (92 aa). The interval 114 to 433 is FERM-like; sequence EEVQLEIYLS…DPNREQVVKL (320 aa). The interval 269–433 is PTB-like F3 module; it reads GYIKFDPCIT…DPNREQVVKL (165 aa). The disordered stretch occupies residues 391–431; it reads SIKKQMQKKRLNGSLQRSDSQQAVKSPPILDSPDPNREQVV. Positions 403–414 are enriched in polar residues; sequence GSLQRSDSQQAV.

It belongs to the sorting nexin family. As to quaternary structure, monomer. Interacts with CCDC22, CCDC93, DSCR3 and VPS35L; the interaction with DSCR3 is direct and associates SNX17 with the retriever and CCC complexes.

It localises to the cytoplasm. Its subcellular location is the early endosome. The protein localises to the cytoplasmic vesicle membrane. Functionally, critical regulator of endosomal recycling of numerous surface proteins, including integrins, signaling receptor and channels. Binds to NPxY sequences in the cytoplasmic tails of target cargos. Associates with retriever and CCC complexes to prevent lysosomal degradation and promote cell surface recycling of numerous cargos such as integrins ITGB1, ITGB5 and their associated alpha subunits. Also required for maintenance of normal cell surface levels of APP and LRP1. Interacts with membranes containing phosphatidylinositol 3-phosphate (PtdIns(3P)). In Danio rerio (Zebrafish), this protein is Sorting nexin-17 (snx17).